The chain runs to 109 residues: Hainantoxin-XVIII-3 (109 aa).

Residues 1 to 18 (MKLSIIIIATSLVIAVVA) form the signal peptide. A propeptide spanning residues 19–46 (FPSKDSKAIENDKTEQRMEIVVQETARA) is cleaved from the precursor. 4 cysteine pairs are disulfide-bonded: Cys47–Cys62, Cys55–Cys68, Cys59–Cys108, and Cys61–Cys81.

Belongs to the neurotoxin 25 family. F7 subfamily. Expressed by the venom gland.

The protein resides in the secreted. In terms of biological role, putative ion channel inhibitor. This chain is Hainantoxin-XVIII-3, found in Cyriopagopus hainanus (Chinese bird spider).